The chain runs to 150 residues: Major facilitator superfamily domain-containing 14C pseudogene (150 aa).

The interval M1–K25 is disordered. The Extracellular segment spans residues M1 to A49. Residues I50 to L70 form a helical membrane-spanning segment. The Cytoplasmic portion of the chain corresponds to H71 to N82. A helical membrane pass occupies residues G83–L103. Residues S104–P111 lie on the Extracellular side of the membrane. The chain crosses the membrane as a helical span at residues F112–C132. Residues R133–A150 lie on the Cytoplasmic side of the membrane.

This sequence belongs to the major facilitator superfamily.

The protein localises to the membrane. The chain is Major facilitator superfamily domain-containing 14C pseudogene from Homo sapiens (Human).